The primary structure comprises 664 residues: Zinc finger protein 710 (664 aa).

Residues lysine 110 and lysine 113 each participate in a glycyl lysine isopeptide (Lys-Gly) (interchain with G-Cter in SUMO2) cross-link. The segment at valine 121 to glutamate 141 is disordered. C2H2-type zinc fingers lie at residues tryptophan 295–histidine 317, histidine 323–histidine 345, and histidine 351–histidine 373. Lysine 377 is covalently cross-linked (Glycyl lysine isopeptide (Lys-Gly) (interchain with G-Cter in SUMO2)). 8 consecutive C2H2-type zinc fingers follow at residues tyrosine 379 to histidine 401, histidine 407 to histidine 429, tyrosine 435 to histidine 457, phenylalanine 463 to histidine 485, phenylalanine 491 to histidine 513, tyrosine 519 to histidine 541, phenylalanine 547 to histidine 569, and phenylalanine 575 to histidine 598.

It belongs to the krueppel C2H2-type zinc-finger protein family.

It is found in the nucleus. In terms of biological role, may be involved in transcriptional regulation. This is Zinc finger protein 710 (ZNF710) from Homo sapiens (Human).